The primary structure comprises 1817 residues: Breast cancer type 1 susceptibility protein homolog (1817 aa).

An N-acetylmethionine modification is found at methionine 1. The RING-type zinc finger occupies 24-65 (CPICLELIKEPVSTQCDHIFCKFCMLKLLNQKKGPSQCPLCK). Residue lysine 109 forms a Glycyl lysine isopeptide (Lys-Gly) (interchain with G-Cter in SUMO2) linkage. Residue serine 114 is modified to Phosphoserine. A Glycyl lysine isopeptide (Lys-Gly) (interchain with G-Cter in SUMO2) cross-link involves residue lysine 299. The tract at residues 305-346 (RSKQSGAAVSQQSRWADSKETCNGRPVPRTEGKADPNVDSLC) is disordered. The segment covering 308–319 (QSGAAVSQQSRW) has biased composition (polar residues). The segment covering 320–340 (ADSKETCNGRPVPRTEGKADP) has biased composition (basic and acidic residues). Lysine 337 participates in a covalent cross-link: Glycyl lysine isopeptide (Lys-Gly) (interchain with G-Cter in SUMO2). Position 393 is a phosphoserine (serine 393). A Glycyl lysine isopeptide (Lys-Gly) (interchain with G-Cter in SUMO2) cross-link involves residue lysine 457. The Nuclear localization signal signature appears at 497-503 (KLKRKRS). Residues lysine 513 and lysine 578 each participate in a glycyl lysine isopeptide (Lys-Gly) (interchain with G-Cter in SUMO2) cross-link. Over residues 640–652 (SEETKKNNSNQTP) the composition is skewed to polar residues. 4 disordered regions span residues 640 to 720 (SEET…SPER), 735 to 768 (NKEL…PDTD), 874 to 907 (LVGA…SEIS), and 959 to 982 (GISQ…TDNR). The span at 669–679 (ADAKKNEPNEH) shows a compositional bias: basic and acidic residues. Residues serine 686, serine 706, and serine 717 each carry the phosphoserine modification. Residues 744-760 (GGEPSGKPTEPSEESTS) are compositionally biased toward low complexity. A compositionally biased stretch (basic and acidic residues) spans 891–901 (SRGEQKERQGQ). Positions 959 to 976 (GISQNSHFRQSVSPLRSS) are enriched in polar residues. Residue serine 975 is modified to Phosphoserine; by CHEK2. Lysine 1049 participates in a covalent cross-link: Glycyl lysine isopeptide (Lys-Gly) (interchain with G-Cter in SUMO2). Residues 1146 to 1185 (LRRESSRSPSPVTHASKSRSLHRGSRKLEFSEESDSTEDE) form a disordered region. Phosphoserine is present on residues serine 1153 and serine 1155. A compositionally biased stretch (basic residues) spans 1161–1170 (SKSRSLHRGS). The segment covering 1176 to 1185 (SEESDSTEDE) has biased composition (acidic residues). 2 positions are modified to phosphoserine: serine 1181 and serine 1242. The disordered stretch occupies residues 1259–1290 (SSQHSAALGSPANALSQDPDFNPPSKQRRHQA). Serine 1298, serine 1304, and serine 1344 each carry phosphoserine. Threonine 1351 bears the Phosphothreonine mark. The segment at 1354-1381 (RATMKDNLIKLQQEMAQLEAVLEQHGSQ) is interaction with PALB2. Disordered stretches follow at residues 1375 to 1486 (LEQH…QEEL) and 1498 to 1534 (PHNL…DSES). Phosphoserine is present on residues serine 1380, serine 1414, and serine 1482. Polar residues-rich tracts occupy residues 1405–1426 (NRSG…SQNP) and 1473–1485 (RSLQ…SQEE). BRCT domains are found at residues 1588-1682 (PKER…EFEV) and 1701-1800 (SQEK…AYLV).

In terms of assembly, heterodimer with BARD1. Part of the BRCA1-associated genome surveillance complex (BASC), which contains BRCA1, MSH2, MSH6, MLH1, ATM, BLM, PMS2 and the MRE11-RAD50-NBN protein (MRN) complex. This association could be a dynamic process changing throughout the cell cycle and within subnuclear domains. Component of the BRCA1-A complex, at least composed of BRCA1, BARD1, UIMC1/RAP80, ABRAXAS1, BRCC3/BRCC36, BABAM2 and BABAM1/NBA1. Interacts (via the BRCT domains) with ABRAXAS1 (phosphorylated form); this is important for recruitment to sites of DNA damage. Can form a heterotetramer with two molecules of ABRAXAS1 (phosphorylated form). Component of the BRCA1-RBBP8 complex. Interacts (via the BRCT domains) with RBBP8 ('Ser-327' phosphorylated form); the interaction ubiquitinates RBBP8, regulates CHEK1 activation, and involves RBBP8 in BRCA1-dependent G2/M checkpoint control on DNA damage. Associates with RNA polymerase II holoenzyme. Interacts with SMC1A, NELFB, DCLRE1C, CLSPN. CHEK1, CHEK2, BAP1, BRCC3, UBXN1 and PCLAF. Interacts (via BRCT domains) with BRIP1 (phosphorylated form). Interacts with FANCD2 (ubiquitinated form). Interacts with H2AX (phosphorylated on 'Ser-140'). Interacts (via the BRCT domains) with ACACA (phosphorylated form); the interaction prevents dephosphorylation of ACACA. Part of a BRCA complex containing BRCA1, BRCA2 and PALB2. Interacts directly with PALB2; the interaction is essential for its function in HRR. Interacts directly with BRCA2; the interaction occurs only in the presence of PALB2 which serves as the bridging protein. Interacts (via the BRCT domains) with LMO4; the interaction represses the transcriptional activity of BRCA1. Interacts (via the BRCT domains) with CCAR2 (via N-terminus); the interaction represses the transcriptional activator activity of BRCA1. Interacts with EXD2. Interacts (via C-terminus) with DHX9; this interaction is direct and links BRCA1 to the RNA polymerase II holoenzyme. Interacts with DNA helicase ZGRF1; the interaction is increased following DNA damage induction. In terms of processing, phosphorylated in response to IR, UV, and various stimuli that cause checkpoint activation, probably by ATM or ATR. Phosphorylation at Ser-975 by CHEK2 regulates mitotic spindle assembly. Phosphorylation by AURKA regulates centrosomal microtubule nucleation. Autoubiquitinated, undergoes 'Lys-6'-linked polyubiquitination. 'Lys-6'-linked polyubiquitination does not promote degradation.

It localises to the nucleus. It is found in the chromosome. The protein localises to the cytoplasm. It catalyses the reaction S-ubiquitinyl-[E2 ubiquitin-conjugating enzyme]-L-cysteine + [acceptor protein]-L-lysine = [E2 ubiquitin-conjugating enzyme]-L-cysteine + N(6)-ubiquitinyl-[acceptor protein]-L-lysine.. It participates in protein modification; protein ubiquitination. E3 ubiquitin-protein ligase that specifically mediates the formation of 'Lys-6'-linked polyubiquitin chains and plays a central role in DNA repair by facilitating cellular responses to DNA damage. It is unclear whether it also mediates the formation of other types of polyubiquitin chains. The BRCA1-BARD1 heterodimer coordinates a diverse range of cellular pathways such as DNA damage repair, ubiquitination and transcriptional regulation to maintain genomic stability. Regulates centrosomal microtubule nucleation. Required for appropriate cell cycle arrests after ionizing irradiation in both the S-phase and the G2 phase of the cell cycle. Required for FANCD2 targeting to sites of DNA damage. Inhibits lipid synthesis by binding to inactive phosphorylated ACACA and preventing its dephosphorylation. Contributes to homologous recombination repair (HRR) via its direct interaction with PALB2, fine-tunes recombinational repair partly through its modulatory role in the PALB2-dependent loading of BRCA2-RAD51 repair machinery at DNA breaks. Component of the BRCA1-RBBP8 complex which regulates CHEK1 activation and controls cell cycle G2/M checkpoints on DNA damage via BRCA1-mediated ubiquitination of RBBP8. Acts as a transcriptional activator. The sequence is that of Breast cancer type 1 susceptibility protein homolog (Brca1) from Rattus norvegicus (Rat).